The sequence spans 251 residues: Triosephosphate isomerase (251 aa).

9-11 (NWK) contributes to the substrate binding site. H96 (electrophile) is an active-site residue. Catalysis depends on E168, which acts as the Proton acceptor. Residues G174, S214, and 235–236 (GG) contribute to the substrate site.

The protein belongs to the triosephosphate isomerase family. As to quaternary structure, homodimer.

The protein resides in the cytoplasm. It catalyses the reaction D-glyceraldehyde 3-phosphate = dihydroxyacetone phosphate. The protein operates within carbohydrate biosynthesis; gluconeogenesis. It functions in the pathway carbohydrate degradation; glycolysis; D-glyceraldehyde 3-phosphate from glycerone phosphate: step 1/1. Its function is as follows. Involved in the gluconeogenesis. Catalyzes stereospecifically the conversion of dihydroxyacetone phosphate (DHAP) to D-glyceraldehyde-3-phosphate (G3P). The polypeptide is Triosephosphate isomerase (Porphyromonas gingivalis (strain ATCC 33277 / DSM 20709 / CIP 103683 / JCM 12257 / NCTC 11834 / 2561)).